The chain runs to 379 residues: MPVPPTLSLDAFAAAKLAGLDAAGLRRRLVPTARTGGARAERDGRAVVSFSCNDYLGLATHPEVVAAAHAALDRYGAGSGGSRLVTGSHPILAELEAALAARKGHEAALVFGSGYLANLGVTPALVGAGDLILIDELGHSCMWAGTRLAGARALPFRHNDLGHLEDLLARERARARRALILTERVFSMDGDRAPVAEILGLARAFDAWTLVDDAHGLGVVGPDATAPLEMGTLSKALGSYGGYLCASRPVIDLLTSRARSFVYTTGLPPASAAAALAALRLIEAEPARAARPLALARRFTARLGLPEAQSAVVPVLVGEAEAALALSRALEARGFLVVAIRPPTVPPGTARLRVAFSAAHEEAEVDALAQALLDLGAAA.

Positions 27 and 34 each coordinate substrate. 114–115 (GY) lines the pyridoxal 5'-phosphate pocket. Substrate is bound at residue histidine 139. Pyridoxal 5'-phosphate contacts are provided by residues serine 187, 212-215 (DDAH), and 232-235 (TLSK). An N6-(pyridoxal phosphate)lysine modification is found at lysine 235. A substrate-binding site is contributed by threonine 344.

The protein belongs to the class-II pyridoxal-phosphate-dependent aminotransferase family. BioF subfamily. As to quaternary structure, homodimer. The cofactor is pyridoxal 5'-phosphate.

It carries out the reaction 6-carboxyhexanoyl-[ACP] + L-alanine + H(+) = (8S)-8-amino-7-oxononanoate + holo-[ACP] + CO2. Its pathway is cofactor biosynthesis; biotin biosynthesis. Functionally, catalyzes the decarboxylative condensation of pimeloyl-[acyl-carrier protein] and L-alanine to produce 8-amino-7-oxononanoate (AON), [acyl-carrier protein], and carbon dioxide. The protein is 8-amino-7-oxononanoate synthase of Methylobacterium sp. (strain 4-46).